Here is a 139-residue protein sequence, read N- to C-terminus: Large ribosomal subunit protein uL16 (139 aa).

Positions 1-17 are enriched in basic residues; it reads MLMPKRVKYRKTQRGRM. The interval 1–24 is disordered; it reads MLMPKRVKYRKTQRGRMKGNSGRG.

Belongs to the universal ribosomal protein uL16 family. Part of the 50S ribosomal subunit.

Functionally, binds 23S rRNA and is also seen to make contacts with the A and possibly P site tRNAs. In Pelodictyon phaeoclathratiforme (strain DSM 5477 / BU-1), this protein is Large ribosomal subunit protein uL16.